A 55-amino-acid chain; its full sequence is Large ribosomal subunit protein bL33 (55 aa).

Belongs to the bacterial ribosomal protein bL33 family.

This is Large ribosomal subunit protein bL33 from Gluconacetobacter diazotrophicus (strain ATCC 49037 / DSM 5601 / CCUG 37298 / CIP 103539 / LMG 7603 / PAl5).